The chain runs to 284 residues: MTKDYQDFQHLDNDNDHHQLRRGPPPTPRLLQRLCSGSRLLLLSSSLSILLLVVVCVITSQNSQLREDLLALRQNFSNLTVSTEDQVKALSTQGSSVGRKMKLVESKLEKQQKDLTEDHSSLLLHVKQLVSDVRSLSCQMAAFRGNGSERTCCPINWVEYEGSCYWFSSSVRPWTEADKYCQLENAHLVVVTSRDEQNFLQRHMGPLNTWIGLTDQNGPWKWVDGTDYETGFQNWRPEQPDNWYGHGLGGGEDCAHFTTDGRWNDDVCRRPYRWVCETKLDKAN.

Over residues methionine 1–histidine 18 the composition is skewed to basic and acidic residues. The disordered stretch occupies residues methionine 1 to proline 25. Over methionine 1–arginine 39 the chain is Cytoplasmic. Positions tyrosine 5–phenylalanine 8 match the Endocytosis signal motif. Residue cysteine 35 is the site of S-palmitoyl cysteine attachment. A helical; Signal-anchor for type II membrane protein membrane pass occupies residues leucine 40 to serine 60. A coiled-coil region spans residues threonine 59–glutamate 117. Residues glutamine 61 to asparagine 284 are Extracellular-facing. Asparagine 75, asparagine 78, and asparagine 146 each carry an N-linked (GlcNAc...) asparagine glycan. 3 cysteine pairs are disulfide-bonded: cysteine 153–cysteine 164, cysteine 181–cysteine 276, and cysteine 254–cysteine 268. The C-type lectin domain maps to tyrosine 160–glutamate 277. Valine 190, glutamate 196, aspartate 215, glutamine 239, aspartate 241, glutamate 252, aspartate 253, asparagine 264, aspartate 265, and glutamate 277 together coordinate Ca(2+).

As to quaternary structure, interacts with LASS2. In terms of processing, phosphorylated on a cytoplasmic Ser residue. In terms of tissue distribution, expressed exclusively in hepatic parenchymal cells.

The protein localises to the membrane. Functionally, mediates the endocytosis of plasma glycoproteins to which the terminal sialic acid residue on their complex carbohydrate moieties has been removed. The receptor recognizes terminal galactose and N-acetylgalactosamine units. After ligand binding to the receptor, the resulting complex is internalized and transported to a sorting organelle, where receptor and ligand are disassociated. The receptor then returns to the cell membrane surface. This chain is Asialoglycoprotein receptor 1 (Asgr1), found in Mus musculus (Mouse).